A 70-amino-acid chain; its full sequence is Large ribosomal subunit protein bL31 (70 aa).

4 residues coordinate Zn(2+): C16, C18, C37, and C40.

It belongs to the bacterial ribosomal protein bL31 family. Type A subfamily. As to quaternary structure, part of the 50S ribosomal subunit. It depends on Zn(2+) as a cofactor.

Its function is as follows. Binds the 23S rRNA. This chain is Large ribosomal subunit protein bL31, found in Klebsiella pneumoniae (strain 342).